The chain runs to 127 residues: UPF0251 protein Ccel_0627 (127 aa).

This sequence belongs to the UPF0251 family.

The polypeptide is UPF0251 protein Ccel_0627 (Ruminiclostridium cellulolyticum (strain ATCC 35319 / DSM 5812 / JCM 6584 / H10) (Clostridium cellulolyticum)).